Reading from the N-terminus, the 257-residue chain is Glucose-1-phosphate cytidylyltransferase (257 aa).

Residues 6–10 (LAGGL), 11–13 (GTR), Lys23, Ser104, Arg109, and Gly128 contribute to the substrate site. Mg(2+)-binding residues include Asp129 and Asp234.

It belongs to the glucose-1-phosphate cytidylyltransferase family. Homohexamer. It depends on Mg(2+) as a cofactor.

It catalyses the reaction alpha-D-glucose 1-phosphate + CTP + H(+) = CDP-D-glucose + diphosphate. It functions in the pathway nucleotide-sugar biosynthesis; CDP-3,6-dideoxy-D-mannose biosynthesis; CDP-3,6-dideoxy-D-mannose from CTP and alpha-D-glucose 1-phosphate: step 1/5. It participates in bacterial outer membrane biogenesis; LPS O-antigen biosynthesis. Involved in the biosynthesis of the tyvelose, a 3,6-dideoxyhexose found in the O-antigen of the surface lipopolysaccharides. It catalyzes the transfer of a CMP moiety from CTP to glucose 1-phosphate. This enzyme can utilize either CTP or UTP as the nucleotide donor. The protein is Glucose-1-phosphate cytidylyltransferase (rfbF) of Salmonella typhi.